The sequence spans 394 residues: Phosphoglycerate kinase (394 aa).

Residues 21–23 (DFN), Arg36, 59–62 (HLGR), Arg118, and Arg151 contribute to the substrate site. Residue Ser183 is modified to Phosphoserine. An ATP-binding site is contributed by Lys201. The residue at position 299 (Thr299) is a Phosphothreonine. ATP-binding positions include Glu323 and 350-353 (GGDS).

This sequence belongs to the phosphoglycerate kinase family. Monomer.

It is found in the cytoplasm. It carries out the reaction (2R)-3-phosphoglycerate + ATP = (2R)-3-phospho-glyceroyl phosphate + ADP. It participates in carbohydrate degradation; glycolysis; pyruvate from D-glyceraldehyde 3-phosphate: step 2/5. The polypeptide is Phosphoglycerate kinase (Geobacillus sp. (strain WCH70)).